Here is a 2514-residue protein sequence, read N- to C-terminus: MSGSTQPVAQTWRATEPRYPPHSLSYPVQIARTHTDVGLLEYQHHSRDYASHLSPGSIIQPQRRRPSLLSEFQPGNERSQELHLRPESHSYLPELGKSEMEFIESKRPRLELLPDPLLRPSPLLATGQPAGSEDLTKDRSLTGKLEPVSPPSPPHTDPELELVPPRLSKEELIQNMDRVDREITMVEQQISKLKKKQQQLEEEAAKPPEPEKPVSPPPIESKHRSLVQIIYDENRKKAEAAHRILEGLGPQVELPLYNQPSDTRQYHENIKINQAMRKKLILYFKRRNHARKQWEQKFCQRYDQLMEAWEKKVERIENNPRRRAKESKVREYYEKQFPEIRKQRELQERMQSRVGQRGSGLSMSAARSEHEVSEIIDGLSEQENLEKQMRQLAVIPPMLYDADQQRIKFINMNGLMADPMKVYKDRQVMNMWSEQEKETFREKFMQHPKNFGLIASFLERKTVAECVLYYYLTKKNENYKSLVRRSYRRRGKSQQQQQQQQQQQQQQQQQPMPRSSQEEKDEKEKEKEAEKEEEKPEVENDKEDLLKEKTDDTSGEDNDEKEAVASKGRKTANSQGRRKGRITRSMANEANSEEAITPQQSAELASMELNESSRWTEEEMETAKKGLLEHGRNWSAIARMVGSKTVSQCKNFYFNYKKRQNLDEILQQHKLKMEKERNARRKKKKAPAAASEEAAFPPVVEDEEMEASGVSGNEEEMVEEAEALHASGNEVPRGECSGPATVNNSSDTESIPSPHTEAAKDTGQNGPKPPATLGADGPPPGPPTPPPEDIPAPTEPTPASEATGAPTPPPAPPSPSAPPPVVPKEEKEEETAAAPPVEEGEEQKPPAAEELAVDTGKAEEPVKSECTEEAEEGPAKGKDAEAAEATAEGALKAEKKEGGSGRATTAKSSGAPQDSDSSATCSADEVDEAEGGDKNRLLSPRPSLLTPTGDPRANASPQKPLDLKQLKQRAAAIPPIQVTKVHEPPREDAAPTKPAPPAPPPPQNLQPESDAPQQPGSSPRGKSRSPAPPADKEAFAAEAQKLPGDPPCWTSGLPFPVPPREVIKASPHAPDPSAFSYAPPGHPLPLGLHDTARPVLPRPPTISNPPPLISSAKHPSVLERQIGAISQGMSVQLHVPYSEHAKAPVGPVTMGLPLPMDPKKLAPFSGVKQEQLSPRGQAGPPESLGVPTAQEASVLRGTALGSVPGGSITKGIPSTRVPSDSAITYRGSITHGTPADVLYKGTITRIIGEDSPSRLDRGREDSLPKGHVIYEGKKGHVLSYEGGMSVTQCSKEDGRSSSGPPHETAAPKRTYDMMEGRVGRAISSASIEGLMGRAIPPERHSPHHLKEQHHIRGSITQGIPRSYVEAQEDYLRREAKLLKREGTPPPPPPSRDLTEAYKTQALGPLKLKPAHEGLVATVKEAGRSIHEIPREELRHTPELPLAPRPLKEGSITQGTPLKYDTGASTTGSKKHDVRSLIGSPGRTFPPVHPLDVMADARALERACYEESLKSRPGTASSSGGSIARGAPVIVPELGKPRQSPLTYEDHGAPFAGHLPRGSPVTTREPTPRLQEGSLSSSKASQDRKLTSTPREIAKSPHSTVPEHHPHPISPYEHLLRGVSGVDLYRSHIPLAFDPTSIPRGIPLDAAAAYYLPRHLAPNPTYPHLYPPYLIRGYPDTAALENRQTIINDYITSQQMHHNAATAMAQRADMLRGLSPRESSLALNYAAGPRGIIDLSQVPHLPVLVPPTPGTPATAMDRLAYLPTAPQPFSSRHSSSPLSPGGPTHLTKPTTTSSSERERDRDRERDRDREREKSILTSTTTVEHAPIWRPGTEQSSGSSGGGGGSSSRPASHSHAHQHSPISPRTQDALQQRPSVLHNTGMKGIITAVEPSTPTVLRSTSTSSPVRPAATFPPATHCPLGGTLDGVYPTLMEPVLLPKEAPRVARPERPRADTGHAFLAKPPARSGLEPASSPSKGSEPRPLVPPVSGHATIARTPAKNLAPHHASPDPPAPPASASDPHREKTQSKPFSIQELELRSLGYHGSSYSPEGVEPVSPVSSPSLTHDKGLPKHLEELDKSHLEGELRPKQPGPVKLGGEAAHLPHLRPLPESQPSSSPLLQTAPGVKGHQRVVTLAQHISEVITQDYTRHHPQQLSAPLPAPLYSFPGASCPVLDLRRPPSDLYLPPPDHGAPARGSPHSEGGKRSPEPNKTSVLGGGEDGIEPVSPPEGMTEPGHSRSAVYPLLYRDGEQTEPSRMGSKSPGNTSQPPAFFSKLTESNSAMVKSKKQEINKKLNTHNRNEPEYNISQPGTEIFNMPAITGTGLMTYRSQAVQEHASTNMGLEAIIRKALMGKYDQWEESPPLSANAFNPLNASASLPAAMPITAADGRSDHTLTSPGGGGKAKVSGRPSSRKAKSPAPGLASGDRPPSVSSVHSEGDCNRRTPLTNRVWEDRPSSAGSTPFPYNPLIMRLQAGVMASPPPPGLPAGSGPLAGPHHAWDEEPKPLLCSQYETLSDSE.

A compositionally biased stretch (polar residues) spans 1–13; it reads MSGSTQPVAQTWR. The segment at 1 to 24 is disordered; that stretch reads MSGSTQPVAQTWRATEPRYPPHSL. R18 is modified (asymmetric dimethylarginine). S54, S67, S149, and S152 each carry phosphoserine. 2 disordered regions span residues 120-162 and 190-220; these read PSPL…ELEL and ISKL…PPIE. T156 carries the post-translational modification Phosphothreonine. Positions 174 to 215 form a coiled coil; it reads QNMDRVDREITMVEQQISKLKKKQQQLEEEAAKPPEPEKPVS. Positions 203-212 are enriched in basic and acidic residues; the sequence is EAAKPPEPEK. S215 is subject to Phosphoserine. Residues 254 to 312 are interaction with SIN3A/B; that stretch reads LPLYNQPSDTRQYHENIKINQAMRKKLILYFKRRNHARKQWEQKFCQRYDQLMEAWEKK. The interval 389 to 480 is deacetylase activation domain (DAD); that stretch reads MRQLAVIPPM…YLTKKNENYK (92 aa). Residues 427-478 enclose the SANT 1 domain; it reads QVMNMWSEQEKETFREKFMQHPKNFGLIASFLERKTVAECVLYYYLTKKNEN. 1D-myo-inositol 1,4,5,6-tetrakisphosphate-binding residues include K449, Y470, and Y471. 3 disordered regions span residues 487 to 622, 674 to 1081, and 1165 to 1186; these read YRRR…EMET, EKER…APPG, and SGVK…SLGV. S493 carries the phosphoserine modification. Positions 494–510 are enriched in low complexity; it reads QQQQQQQQQQQQQQQQQ. A compositionally biased stretch (basic and acidic residues) spans 516–552; the sequence is SQEEKDEKEKEKEAEKEEEKPEVENDKEDLLKEKTDD. Positions 522–561 form a coiled coil; that stretch reads EKEKEKEAEKEEEKPEVENDKEDLLKEKTDDTSGEDNDEK. T553 is subject to Phosphothreonine. S554 bears the Phosphoserine mark. Composition is skewed to polar residues over residues 597-613 and 740-753; these read TPQQ…NESS and ATVN…SIPS. The 52-residue stretch at 610 to 661 folds into the SANT 2 domain; that stretch reads NESSRWTEEEMETAKKGLLEHGRNWSAIARMVGSKTVSQCKNFYFNYKKRQN. Phosphoserine is present on residues S750 and S753. 2 stretches are compositionally biased toward pro residues: residues 777 to 796 and 806 to 822; these read GPPP…PTEP and PTPP…PPVV. The segment covering 856–866 has biased composition (basic and acidic residues); it reads GKAEEPVKSEC. K878 is modified (N6-acetyllysine). Polar residues predominate over residues 902–921; it reads RATTAKSSGAPQDSDSSATC. Over residues 937 to 948 the composition is skewed to low complexity; it reads LLSPRPSLLTPT. Residue S939 is modified to Phosphoserine. T946 carries the post-translational modification Phosphothreonine. S956 bears the Phosphoserine mark. K959 is modified (N6-acetyllysine). Residues 980–990 are compositionally biased toward basic and acidic residues; the sequence is KVHEPPREDAA. Pro residues predominate over residues 993-1004; the sequence is KPAPPAPPPPQN. The segment covering 1005 to 1014 has biased composition (polar residues); that stretch reads LQPESDAPQQ. K1168 participates in a covalent cross-link: Glycyl lysine isopeptide (Lys-Gly) (interchain with G-Cter in SUMO2). At S1173 the chain carries Phosphoserine. N6-acetyllysine is present on residues K1210 and K1240. The residue at position 1251 (S1251) is a Phosphoserine. Residues 1287 to 1307 form a disordered region; sequence TQCSKEDGRSSSGPPHETAAP. A Phosphoserine modification is found at S1323. Residue T1383 is modified to Phosphothreonine. Disordered stretches follow at residues 1440–1482 and 1506–1609; these read PLAP…SPGR and ESLK…HPIS. Phosphoserine is present on S1479. Low complexity predominate over residues 1513 to 1526; that stretch reads GTASSSGGSIARGA. A phosphoserine mark is found at S1539, S1595, and S1619. R1653 is modified (asymmetric dimethylarginine). Disordered regions lie at residues 1763-1867 and 1937-2124; these read TAPQ…TQDA and KEAP…PGVK. The span at 1766–1782 shows a compositional bias: low complexity; it reads QPFSSRHSSSPLSPGGP. 2 positions are modified to phosphoserine: S1775 and S1778. Over residues 1794–1813 the composition is skewed to basic and acidic residues; that stretch reads SERERDRDRERDRDREREKS. Residue S1861 is modified to Phosphoserine. Basic and acidic residues predominate over residues 1938-1952; it reads EAPRVARPERPRADT. The residue at position 1959 (K1959) is an N6-acetyllysine. Position 2005 is a phosphoserine (S2005). K2026 carries the N6-acetyllysine modification. The span at 2043–2060 shows a compositional bias: low complexity; it reads SSYSPEGVEPVSPVSSPS. Residues S2046, S2054, S2057, S2058, and S2060 each carry the phosphoserine modification. T2062 is modified (phosphothreonine). Over residues 2062–2085 the composition is skewed to basic and acidic residues; sequence THDKGLPKHLEELDKSHLEGELRP. S2077 is subject to Phosphoserine. Residues 2106–2117 show a composition bias toward low complexity; it reads LPESQPSSSPLL. The segment at 2128 to 2131 is required for interaction with RARA in the absence of its ligand; the sequence is RVVT. Positions 2136-2140 match the CORNR box of ID1 motif; sequence ISEVI. Disordered stretches follow at residues 2174–2235 and 2248–2269; these read RRPP…GHSR and QTEP…PAFF. A phosphoserine mark is found at S2203, S2223, and S2258. The CORNR box of ID2 signature appears at 2339-2343; sequence LEAII. Positions 2384–2500 are disordered; the sequence is DGRSDHTLTS…PHHAWDEEPK (117 aa). S2413 bears the Phosphoserine mark. Over residues 2482 to 2492 the composition is skewed to low complexity; sequence PAGSGPLAGPH.

It belongs to the N-CoR nuclear receptor corepressors family. As to quaternary structure, forms a large corepressor complex that contains SIN3A/B and histone deacetylases HDAC1 and HDAC2. This complex associates with the thyroid (TR) and the retinoid acid receptors (RAR) in the absence of ligand, and may stabilize their interaction with TFIIB. Interacts directly with RARA in the absence of ligand; the interaction represses RARA activity. Interacts (isoform SMRT) with HDAC10. Interacts with MINT. Component of the N-Cor repressor complex, at least composed of NCOR1, NCOR2, HDAC3, TBL1X, TBL1R, CORO2A and GPS2. Interacts with CBFA2T3 and ATXN1L. Interacts with RARB; the interaction is weak and does not repress RARB transactivational activity. Interacts (via 1D-myo-inositol 1,4,5,6-tetrakisphosphate) with HDAC3; promoting the histone deacetylase activity of HDAC3. Interacts with HDAC7 and C1D. Interacts with NR4A2; this interaction increases in the absence of PITX3. Interacts with BCL6 (via the BTB domain), required for BCL6 transcriptional repressor activity on a subset of target genes. Forms ternary complexes with BCOR and BCL6 on target gene promoters but, on enhancer elements, interacts with BCL6 and HDAC3 to repress proximal gene expression. May interact with DEAF1. Interacts with RXRA. Interacts with MECP2. Interacts with ZBTB7A. Interacts with AR. Interacts with TBL1Y. Interacts with SANBR (via the BTB domain). In terms of tissue distribution, ubiquitous. High levels of expression are detected in lung, spleen and brain.

Its subcellular location is the nucleus. In terms of biological role, transcriptional corepressor that mediates the transcriptional repression activity of some nuclear receptors by promoting chromatin condensation, thus preventing access of the basal transcription. Acts by recruiting chromatin modifiers, such as histone deacetylases HDAC1, HDAC2 and HDAC3. Required to activate the histone deacetylase activity of HDAC3. Involved in the regulation BCL6-dependent of the germinal center (GC) reactions, mainly through the control of the GC B-cells proliferation and survival. Recruited by ZBTB7A to the androgen response elements/ARE on target genes, negatively regulates androgen receptor signaling and androgen-induced cell proliferation. Isoform 1 and isoform 4 have different affinities for different nuclear receptors. In Homo sapiens (Human), this protein is Nuclear receptor corepressor 2.